The chain runs to 585 residues: Nucleoporin p58/p45 (585 aa).

Repeat copies occupy residues 7–8 (FG), 30–31 (FG), 42–43 (FG), 61–62 (FG), and 66–67 (FG). A 14 X 2 AA repeats of F-G region spans residues 7–565 (FGSGTLGSTT…VSNPASAGFG (559 aa)). Residues 194–232 (TSAASSEGLGGIDFSTSSDKKSDKTGTRPEDSKALKDEN) form a disordered region. Residues 211-232 (SDKKSDKTGTRPEDSKALKDEN) are compositionally biased toward basic and acidic residues. Coiled coils occupy residues 242–262 (ENLQ…SRMS) and 300–367 (ETAQ…SHIT). Thr317 is subject to Phosphothreonine. A run of 9 repeats spans residues 474–475 (FG), 478–479 (FG), 499–500 (FG), 505–506 (FG), 515–516 (FG), 517–518 (FG), 531–532 (FG), 554–555 (FG), and 564–565 (FG). The interval 563-585 (GFGTGGQLLQLKRPPAGNKRGKR) is disordered.

This sequence belongs to the NUP58 family. Component of the p62 complex, a complex composed of NUP62, NUP54, and isoform p58 and isoform p45 of NUP58. Isoform p58 interacts with NUTF2. Isoform p58 interacts with SRP1-alpha and Importin p97 proteins when they are together, but not with SRP1-alpha protein alone. Post-translationally, O-glycosylated. In terms of tissue distribution, expressed in liver.

The protein localises to the nucleus. The protein resides in the nuclear pore complex. It is found in the nucleus membrane. In terms of biological role, component of the nuclear pore complex, a complex required for the trafficking across the nuclear membrane. This is Nucleoporin p58/p45 from Rattus norvegicus (Rat).